A 938-amino-acid chain; its full sequence is Auxilin (938 aa).

The disordered stretch occupies residues 19-41 (AAAGENRMKDSENKGASSPDMEP). Repeat copies occupy residues 61 to 64 (NLKD), 65 to 68 (NLKD), and 69 to 72 (TLKD). The segment at 61–72 (NLKDNLKDTLKD) is 3 X 4 AA approximate tandem repeats. The Phosphatase tensin-type domain occupies 80-247 (SVSSYTKGDL…GYMCDLLADK (168 aa)). S137 is modified (phosphoserine). C189 serves as the catalytic Phosphocysteine intermediate. One can recognise a C2 tensin-type domain in the interval 253-391 (FKPLTIKAIT…FQVTLDIEVQ (139 aa)). An SH3-binding motif is present at residues 434–442 (PADLPPDHP). A disordered region spans residues 467-801 (EEDHAALVNQ…GKGSTNLEGK (335 aa)). Phosphoserine occurs at positions 478 and 481. Residues 531 to 548 (DVSTNFSSLAAPPSNSEL) show a composition bias toward polar residues. A compositionally biased stretch (low complexity) spans 559 to 569 (TGPAQAGQAGV). Polar residues-rich tracts occupy residues 579 to 596 (VSAQSTPRRTATSASASP) and 624 to 654 (FLNTSSASSDPFLQPTRSPSPTVHASSTPAV). S595 is subject to Phosphoserine. Low complexity predominate over residues 679–694 (SAATSPTGSSHGTPTH). Over residues 754–781 (NWQQTQSKPQSSMPHSSPQNRPNYNVSF) the composition is skewed to polar residues. Residues 874 to 938 (TKWKPVGMAD…FENQGQKPLY (65 aa)) enclose the J domain.

Forms a complex composed of HSPA8, CLTC and DNAJC6. Interacts with HSPA8/HSC70 in an ATP-dependent manner; this interaction stimulates the HSPA8's ATPase activity. Interacts with CLTC; this interaction produces a local change in heavy-chain contacts, creating a detectable global distortion of the clathrin coat. Interacts with AP2A2. Interacts with DNM1(GTP-bound form); this interaction allows clathrin-coated vesicle (CCV) formation at the plasma membrane. In terms of processing, the N-terminus is blocked. Post-translationally, phosphorylation at Ser-595 modulates its ability to bind CLTC and therefore the synaptic vesicle endocytosis (SVE).

It is found in the cytoplasmic vesicle. Its subcellular location is the clathrin-coated vesicle. May act as a protein phosphatase and/or a lipid phosphatase. Co-chaperone that recruits HSPA8/HSC70 to clathrin-coated vesicles (CCVs) and promotes the ATP-dependent dissociation of clathrin from CCVs and participates in clathrin-mediated endocytosis of synaptic vesicles and their recycling and also in intracellular trafficking. Firstly, binds tightly to the clathrin cages, at a ratio of one DNAJC6 per clathrin triskelion. The HSPA8:ATP complex then binds to the clathrin-auxilin cage, initially at a ratio of one HSPA8 per triskelion leading to ATP hydrolysis stimulation and causing a conformational change in the HSPA8. This cycle is repeated three times to drive to a complex containing the clathrin-auxilin cage associated to three HSPA8:ADP complex. The ATP hydrolysis of the third HSPA8:ATP complex leads to a concerted dismantling of the cage into component triskelia. Then, dissociates from the released triskelia and be recycled to initiate another cycle of HSPA8's recruitment. Also acts during the early steps of clathrin-coated vesicle (CCV) formation through its interaction with the GTP bound form of DNM1. This Mus musculus (Mouse) protein is Auxilin.